We begin with the raw amino-acid sequence, 976 residues long: Dibasic-processing endoprotease (976 aa).

Residues 1–17 (MLRKFILGLLLASQAVA) form the signal peptide. Residue N156 is glycosylated (N-linked (GlcNAc...) asparagine). Residues 172–212 (AEEAQKAQDDKGDKKEDQKDDKKEGQEAQKEGDKEDNKGDD) show a composition bias toward basic and acidic residues. The disordered stretch occupies residues 172-246 (AEEAQKAQDD…VQWKPVDESM (75 aa)). Residues 213–231 (KEDGEEDDDDDEDEDDDDA) are compositionally biased toward acidic residues. Residues 277 to 595 (QWYLHNVHKA…YGKLDASKIV (319 aa)) enclose the Peptidase S8 domain. N-linked (GlcNAc...) asparagine glycans are attached at residues N291 and N299. The Charge relay system role is filled by D311. N-linked (GlcNAc...) asparagine glycosylation is present at N336. Active-site charge relay system residues include H349 and S528. The chain crosses the membrane as a helical span at residues 524–544 (HGGTSAAAPLAAGVFALALSV). In terms of domain architecture, P/Homo B spans 604–737 (VNNQTSFHSE…QLNVFGEQKD (134 aa)). Residue N606 is glycosylated (N-linked (GlcNAc...) asparagine). A disordered region spans residues 733–848 (GEQKDKREEN…SDSHTSWWPD (116 aa)). Residues 734–830 (EQKDKREENK…EEKPEEKPVD (97 aa)) show a composition bias toward basic and acidic residues. A helical transmembrane segment spans residues 855–875 (AWLYGAVLLVGGFIAVIGIYA). N886 carries N-linked (GlcNAc...) asparagine glycosylation. The tract at residues 914–976 (PEDTHRRSGD…RDNDRQNLLG (63 aa)) is disordered. 2 stretches are compositionally biased toward basic and acidic residues: residues 915–928 (EDTH…DRLY) and 940–976 (MFRI…NLLG).

Belongs to the peptidase S8 family. Furin subfamily.

The protein localises to the membrane. This is Dibasic-processing endoprotease (XPR6) from Yarrowia lipolytica (strain CLIB 122 / E 150) (Yeast).